The chain runs to 201 residues: Extracellular superoxide dismutase [Cu-Zn] (201 aa).

Positions 1 to 42 (MINSFIVIFLSFLIFINYANLVCVEATHVYGRRSHSNGMHGN) are cleaved as a signal peptide. The Cu cation site is built by histidine 89, histidine 91, and histidine 106. Cysteines 100 and 192 form a disulfide. Positions 106, 114, 123, and 126 each coordinate Zn(2+). Position 163 (histidine 163) interacts with Cu cation.

It belongs to the Cu-Zn superoxide dismutase family. As to quaternary structure, homodimer. Cu cation is required as a cofactor. Zn(2+) serves as cofactor.

It localises to the secreted. Its subcellular location is the extracellular space. The catalysed reaction is 2 superoxide + 2 H(+) = H2O2 + O2. Destroys radicals which are normally produced within the cells and which are toxic to biological systems. May act in the parasite defense against phagocyte-generated reactive oxygen species. The polypeptide is Extracellular superoxide dismutase [Cu-Zn] (sod-4) (Onchocerca volvulus).